The primary structure comprises 175 residues: Alpha-crystallin B chain (175 aa).

An N-acetylmethionine modification is found at Met-1. Phosphoserine occurs at positions 19, 45, and 59. The 109-residue stretch at 56–164 (RAPSWIDTGL…PERTIPITRE (109 aa)) folds into the sHSP domain. His-83 is a Zn(2+) binding site. N6-acetyllysine is present on Lys-92. His-104, Glu-106, His-111, and His-119 together coordinate Zn(2+). Residues 142-175 (VLTVNGPRKQASGPERTIPITREEKPAVTAAPKK) are disordered. N6-acetyllysine is present on Lys-166. Thr-170 carries O-linked (GlcNAc) threonine glycosylation.

Belongs to the small heat shock protein (HSP20) family. As to quaternary structure, heteromer composed of three CRYAA and one CRYAB subunits. Aggregates with homologous proteins, including the small heat shock protein HSPB1, to form large heteromeric complexes. Inter-subunit bridging via zinc ions enhances stability, which is crucial as there is no protein turn over in the lens. Interacts with HSPBAP1. Interacts with TTN/titin. Interacts with TMEM109; in the cellular response to DNA damage. Interacts with DES; binds rapidly during early stages of DES filament assembly and a reduced binding seen in the later stages. Interacts with TMED10; the interaction mediates the translocation from the cytoplasm into the ERGIC (endoplasmic reticulum-Golgi intermediate compartment) and thereby secretion. Interacts with ATP6V1A and with MTOR, forming a ternary complex. As to expression, lens as well as other tissues.

It is found in the cytoplasm. The protein resides in the nucleus. The protein localises to the secreted. Its subcellular location is the lysosome. Functionally, may contribute to the transparency and refractive index of the lens. Has chaperone-like activity, preventing aggregation of various proteins under a wide range of stress conditions. In lens epithelial cells, stabilizes the ATP6V1A protein, preventing its degradation by the proteasome. In Rattus norvegicus (Rat), this protein is Alpha-crystallin B chain.